Reading from the N-terminus, the 192-residue chain is Orotate phosphoribosyltransferase (192 aa).

Position 116–124 (116–124) interacts with 5-phospho-alpha-D-ribose 1-diphosphate; sequence EDVVTTGKS. The orotate site is built by T120 and R148.

This sequence belongs to the purine/pyrimidine phosphoribosyltransferase family. PyrE subfamily. As to quaternary structure, homodimer. Requires Mg(2+) as cofactor.

It carries out the reaction orotidine 5'-phosphate + diphosphate = orotate + 5-phospho-alpha-D-ribose 1-diphosphate. It participates in pyrimidine metabolism; UMP biosynthesis via de novo pathway; UMP from orotate: step 1/2. Catalyzes the transfer of a ribosyl phosphate group from 5-phosphoribose 1-diphosphate to orotate, leading to the formation of orotidine monophosphate (OMP). The sequence is that of Orotate phosphoribosyltransferase from Clostridium perfringens (strain ATCC 13124 / DSM 756 / JCM 1290 / NCIMB 6125 / NCTC 8237 / Type A).